The chain runs to 197 residues: MRLKQGSFLWYLYLDKIYCLLSVRNVKALAEYFHILDVHGKNTLNDVLFYHFLHHVTDLKKAQINIVFDMLDWNAVGEIDFEKFYMLVCMLLAHQNHLEGQFMYRHSRPVFDLLDLKGDLRIGAKNFEMYRFLFNIQKQELKDLFRDFDITGDNRLNYQEFKLYTIIYTDKLQKRQKTEEKEKGERKRSLYSKCHIK.

Asp-58 and Asp-69 together coordinate Ca(2+). EF-hand domains follow at residues 59-94 (LKKA…LLAH), 100-135 (GQFM…FLFN), and 136-171 (IQKQ…YTDK). Ca(2+) is bound by residues Asp-149, Asp-153, Arg-155, and Glu-160. The span at 177–188 (KTEEKEKGERKR) shows a compositional bias: basic and acidic residues. The disordered stretch occupies residues 177–197 (KTEEKEKGERKRSLYSKCHIK).

As to quaternary structure, component of the CatSper complex or CatSpermasome composed of the core pore-forming members CATSPER1, CATSPER2, CATSPER3 and CATSPER4 as well as auxiliary members CATSPERB, CATSPERG, CATSPERD, CATSPERE, CATSPERZ, C2CD6/CATSPERT, TMEM249, TMEM262 and EFCAB9. HSPA1 may be an additional auxiliary complex member. The core complex members CATSPER1, CATSPER2, CATSPER3 and CATSPER4 form a heterotetrameric channel. The auxiliary CATSPERB, CATSPERG, CATSPERD and CATSPERE subunits form a pavilion-like structure over the pore which stabilizes the complex through interactions with CATSPER4, CATSPER3, CATSPER1 and CATSPER2 respectively. TMEM262/CATSPERH interacts with CATSPERB, further stabilizing the complex. C2CD6/CATSPERT interacts at least with CATSPERD and is required for targeting the CatSper complex in the flagellar membrane. Interacts with CATSPERZ; the interaction is direct, Ca(2+)-dependent and connects EFCAB9 with the CatSper complex. Dissociates from CATSPERZ at elevated pH.

It localises to the cytoplasm. The protein localises to the cell projection. The protein resides in the cilium. It is found in the flagellum. Functionally, auxiliary component of the CatSper complex, a complex involved in sperm cell hyperactivation. pH-dependent Ca(2+) sensor required to activate the CatSper channel. Sperm cell hyperactivation is needed for sperm motility which is essential late in the preparation of sperm for fertilization. Associates with the CatSper complex via direct interaction with CATSPERZ, and senses intracellular Ca(2+). Together with CATSPERZ, associates with the CatSper channel pore and is required for the two-row structure of each single CatSper channel. The protein is EF-hand calcium-binding domain-containing protein 9 of Homo sapiens (Human).